The following is a 603-amino-acid chain: MCSISQKVVIGLNKAAANNCLQNLDRRGFKTRRVSSSEAASCLRASSSLQLDVKPVEEGRRSGNYQPSIWDFNYVQSLNTPYKEERYLTRHAELIVQVKPLLEKKMEATQQLELIDDLNNLGLSYFFQDRIKQILSFIYDENQCFHSNINDQAEKRDLYFTALGFRLLRQHGFNVSQEVFDCFKNDKGSDFKASLSGNTKGLLQLYEASFLVREGEDTLELARQFATKFLRRKLDEIDDNHLLSRIHHSLEIPLHWRIQRLEARWFLDAYATRHDMNPIILELAKLDFNIIQATHQEELKDVSRWWQNTRLAEKLPFVRDRLVESYFWAIALFEPHQYGYQRRVAAKIITLATSIDDVYDIYGTLDELQLFTDNFRRWDTESLGGLPYSMQLFYMVIHNFVSELAYEILKEKGFIAIPYLQRSWVDLAESFLKEANWYYSGYTPSLEEYIDNGSISIGAVAVLSQVYFTLANSIEKPKIESMYKYHHILRLSGLLVRLHDDLGTSLFEKKRGDVPKAVEICMKERNDTEEEAEEHVKYLIREAWKEMNTATAAAGCPFMDELNVAAANLGRAAQFVYLDGDGHGVQHSKIHQQMGGLMFKPYV.

The N-terminal 35 residues, 1 to 35, are a transit peptide targeting the chloroplast; the sequence is MCSISQKVVIGLNKAAANNCLQNLDRRGFKTRRVS. The (2E)-geranyl diphosphate site is built by Arg-319, Asp-356, Asp-360, Arg-497, and Asp-500. Residues Asp-356 and Asp-360 each coordinate Mg(2+). The short motif at 356-360 is the DDXXD motif element; that stretch reads DDVYD. Positions 500, 504, and 508 each coordinate Mg(2+).

This sequence belongs to the terpene synthase family. Tpsb subfamily. As to quaternary structure, monomer. It depends on Mg(2+) as a cofactor. The cofactor is Mn(2+).

It localises to the plastid. It is found in the chloroplast. The enzyme catalyses (2E)-geranyl diphosphate + H2O = (2E)-geraniol + diphosphate. It functions in the pathway secondary metabolite biosynthesis; terpenoid biosynthesis. Monoterpene synthase (mono-TPS) involved in the biosynthesis of monoterpenes natural products. Catalyzes the conversion of (2E)-geranyl diphosphate (GPP) into geraniol. This Perilla frutescens var. hirtella (Perilla citriodora) protein is Geraniol synthase Tps-5031G8, chloroplastic.